We begin with the raw amino-acid sequence, 204 residues long: DNA polymerase epsilon subunit D (204 aa).

The segment covering 165–177 has biased composition (basic and acidic residues); the sequence is KEVQRRRAEKTPA. The segment at 165–204 is disordered; the sequence is KEVQRRRAEKTPAADEGQAEEGDAADEEEGSHKRAKLDEH. Residues 181-193 show a composition bias toward acidic residues; that stretch reads GQAEEGDAADEEE. The segment covering 194-204 has biased composition (basic and acidic residues); the sequence is GSHKRAKLDEH.

In terms of assembly, heterotetramer. Consists of four subunits: POL2, DPB2, DPB3 and DPB4.

It localises to the nucleus. As accessory component of the DNA polymerase epsilon (DNA polymerase II) participates in chromosomal DNA replication. The chain is DNA polymerase epsilon subunit D (DPB4) from Eremothecium gossypii (strain ATCC 10895 / CBS 109.51 / FGSC 9923 / NRRL Y-1056) (Yeast).